The chain runs to 651 residues: ATP-dependent zinc metalloprotease FtsH (651 aa).

Residues 1-134 (MIVFATILFG…FTTDPQTAGP (134 aa)) are Extracellular-facing. A helical transmembrane segment spans residues 135–155 (WARAIAVMAPFVLILLLFFLM). The Cytoplasmic segment spans residues 156–651 (TRTGRSASQS…PAMSVNGHRG (496 aa)). 229–236 (GPPGTGKT) contributes to the ATP binding site. Histidine 451 is a binding site for Zn(2+). Glutamate 452 is an active-site residue. Histidine 455 and aspartate 527 together coordinate Zn(2+).

In the central section; belongs to the AAA ATPase family. This sequence in the C-terminal section; belongs to the peptidase M41 family. In terms of assembly, homohexamer. Requires Zn(2+) as cofactor.

It localises to the cell membrane. Its function is as follows. Acts as a processive, ATP-dependent zinc metallopeptidase for both cytoplasmic and membrane proteins. Plays a role in the quality control of integral membrane proteins. The chain is ATP-dependent zinc metalloprotease FtsH from Rubrobacter xylanophilus (strain DSM 9941 / JCM 11954 / NBRC 16129 / PRD-1).